The primary structure comprises 356 residues: Cyclin-D4-1 (356 aa).

The protein belongs to the cyclin family. Cyclin D subfamily.

This chain is Cyclin-D4-1 (CYCD4-1), found in Oryza sativa subsp. japonica (Rice).